Reading from the N-terminus, the 956-residue chain is Translation initiation factor IF-2 (956 aa).

Disordered regions lie at residues 53 to 102, 116 to 315, and 334 to 371; these read QFAG…QQEI, GKID…NRPA, and TLEK…ALDE. A compositionally biased stretch (basic and acidic residues) spans 58 to 102; that stretch reads KGNKEASKEVGEEKRKEKEALRVEREKEIEDKRRQEEERQKQQEI. Residues 142-158 show a composition bias toward polar residues; it reads VTPTQTEKPVQKETVQS. Residues 166-186 are compositionally biased toward basic and acidic residues; that stretch reads SEEKKVEKPIITEKKEVKAES. Low complexity predominate over residues 197–208; the sequence is TDPTTAEETITT. Positions 209 to 229 are enriched in polar residues; sequence QYQKLSGTTLTGQTIDLSQFN. Over residues 240–257 the composition is skewed to low complexity; sequence ITPNKPGTPGVGNNNNAN. Residues 343–352 are compositionally biased toward basic residues; that stretch reads GKSKAAKYRR. The span at 353 to 371 shows a compositional bias: basic and acidic residues; it reads DKRETHRQKSDDEQRALDE. Residues 454–622 enclose the tr-type G domain; the sequence is TRAPIVTVMG…KVLLEAEILD (169 aa). A G1 region spans residues 463-470; the sequence is GHVDHGKT. GTP is bound at residue 463-470; it reads GHVDHGKT. The segment at 488–492 is G2; that stretch reads GITQH. A G3 region spans residues 510–513; sequence DTPG. Residues 510–514 and 564–567 each bind GTP; these read DTPGH and NKVD. Residues 564–567 are G4; sequence NKVD. The interval 600–602 is G5; that stretch reads SAK.

This sequence belongs to the TRAFAC class translation factor GTPase superfamily. Classic translation factor GTPase family. IF-2 subfamily.

The protein resides in the cytoplasm. Its function is as follows. One of the essential components for the initiation of protein synthesis. Protects formylmethionyl-tRNA from spontaneous hydrolysis and promotes its binding to the 30S ribosomal subunits. Also involved in the hydrolysis of GTP during the formation of the 70S ribosomal complex. The chain is Translation initiation factor IF-2 from Flavobacterium johnsoniae (strain ATCC 17061 / DSM 2064 / JCM 8514 / BCRC 14874 / CCUG 350202 / NBRC 14942 / NCIMB 11054 / UW101) (Cytophaga johnsonae).